Here is a 68-residue protein sequence, read N- to C-terminus: Peptide Hp1090 (68 aa).

A signal peptide spans 1 to 23 (MKTQFAIFLITLVLFQMFSQSDA). At F36 the chain carries Phenylalanine amide. A propeptide spanning residues 40-68 (GLSDLDDLDESFDGEVSQADIDFLKELMQ) is cleaved from the precursor.

It belongs to the non-disulfide-bridged peptide (NDBP) superfamily. Short antimicrobial peptide (group 4) family. In terms of tissue distribution, expressed by the venom gland.

The protein localises to the secreted. It localises to the target cell membrane. Its function is as follows. Amphipathic peptide which inhibits the growth of Gram-positive bacteria. The sequence is that of Peptide Hp1090 from Heterometrus petersii (Asian forest scorpion).